Consider the following 805-residue polypeptide: Hypoxia-inducible factor 1-alpha (805 aa).

Positions 1-26 (MEGSVVVSEKKRISSERRKEKSRDAA) are disordered. Residues 8–26 (SEKKRISSERRKEKSRDAA) show a composition bias toward basic and acidic residues. The 54-residue stretch at 17 to 70 (RRKEKSRDAARCRRSNESEVFYELSHELPLPHNVSSHLDKASIMRLDHQLPAVE) folds into the bHLH domain. PAS domains are found at residues 85–157 (DKQL…PAKK) and 229–300 (PHPS…TKGQ). In terms of domain architecture, PAC spans 303 to 346 (TGQYRMLAKKGGYVWVETQATVIYNSKNSQPQCIVCVNYVLSEV). Pro-404 and Pro-560 each carry 4-hydroxyproline. Residues 628–669 (KESTSAPVSPYNGNRSRTSSPVRPAKAVVDKTEKSRPGTPNL) are disordered. Residues 629–648 (ESTSAPVSPYNGNRSRTSSP) show a composition bias toward polar residues. Position 782 is a (3S)-3-hydroxyasparagine (Asn-782).

In terms of assembly, efficient DNA binding requires heterodimerization of an alpha and a beta/ARNT subunit. In normoxia, is hydroxylated on Pro-404 and Pro-560. The hydroxylated prolines promote interaction with VHL, initiating rapid ubiquitination and subsequent proteasomal degradation. Under hypoxia, proline hydroxylation is impaired and ubiquitination is attenuated, resulting in stabilization. In terms of processing, in normoxia, is hydroxylated on Asn-782, thus abrogating interaction with CREBBP and EP300 and preventing transcriptional activation. Post-translationally, the iron and 2-oxoglutarate dependent 3-hydroxylation of asparagine is (S) stereospecific within HIF CTAD domains.

It is found in the cytoplasm. The protein localises to the nucleus. It localises to the nucleus speckle. Induced by reactive oxygen species (ROS). Its function is as follows. Functions as a master transcriptional regulator of the adaptive response to hypoxia. Under hypoxic conditions, activates the transcription of over 40 genes, including erythropoietin, glucose transporters, glycolytic enzymes, vascular endothelial growth factor, HILPDA, and other genes whose protein products increase oxygen delivery or facilitate metabolic adaptation to hypoxia. Plays an essential role in embryonic vascularization, tumor angiogenesis and pathophysiology of ischemic disease. The chain is Hypoxia-inducible factor 1-alpha (hif1a) from Xenopus laevis (African clawed frog).